A 615-amino-acid polypeptide reads, in one-letter code: 3-(3-hydroxy-phenyl)propionate/3-hydroxycinnamic acid hydroxylase 1 (615 aa).

Residues 1 to 20 (MRPAFEPAAGLGRAHPHETT) form a disordered region. Residues 27–56 (DVAIIGAGPVGLMIANILGLQGVRVVVVEK) and 294–304 (FRVKRILLAGD) each bind FAD.

Belongs to the PheA/TfdB FAD monooxygenase family. Requires FAD as cofactor.

The enzyme catalyses 3-(3-hydroxyphenyl)propanoate + NADH + O2 + H(+) = 3-(2,3-dihydroxyphenyl)propanoate + NAD(+) + H2O. It catalyses the reaction (2E)-3-(3-hydroxyphenyl)prop-2-enoate + NADH + O2 + H(+) = (2E)-3-(2,3-dihydroxyphenyl)prop-2-enoate + NAD(+) + H2O. It functions in the pathway aromatic compound metabolism; 3-phenylpropanoate degradation. Its function is as follows. Catalyzes the insertion of one atom of molecular oxygen into position 2 of the phenyl ring of 3-(3-hydroxyphenyl)propionate (3-HPP) and hydroxycinnamic acid (3HCI). In Burkholderia vietnamiensis (strain G4 / LMG 22486) (Burkholderia cepacia (strain R1808)), this protein is 3-(3-hydroxy-phenyl)propionate/3-hydroxycinnamic acid hydroxylase 1.